The primary structure comprises 345 residues: S-adenosylmethionine:tRNA ribosyltransferase-isomerase (345 aa).

It belongs to the QueA family. As to quaternary structure, monomer.

It is found in the cytoplasm. It carries out the reaction 7-aminomethyl-7-carbaguanosine(34) in tRNA + S-adenosyl-L-methionine = epoxyqueuosine(34) in tRNA + adenine + L-methionine + 2 H(+). It participates in tRNA modification; tRNA-queuosine biosynthesis. Transfers and isomerizes the ribose moiety from AdoMet to the 7-aminomethyl group of 7-deazaguanine (preQ1-tRNA) to give epoxyqueuosine (oQ-tRNA). In Shewanella pealeana (strain ATCC 700345 / ANG-SQ1), this protein is S-adenosylmethionine:tRNA ribosyltransferase-isomerase.